The primary structure comprises 257 residues: Trans-aconitate 2-methyltransferase (257 aa).

The protein belongs to the methyltransferase superfamily. Tam family.

It localises to the cytoplasm. The enzyme catalyses trans-aconitate + S-adenosyl-L-methionine = (E)-3-(methoxycarbonyl)pent-2-enedioate + S-adenosyl-L-homocysteine. In terms of biological role, catalyzes the S-adenosylmethionine monomethyl esterification of trans-aconitate. This is Trans-aconitate 2-methyltransferase from Sinorhizobium fredii (strain NBRC 101917 / NGR234).